The primary structure comprises 247 residues: E3 ubiquitin-protein ligase RNF182 (247 aa).

The segment at 20–68 adopts an RING-type zinc-finger fold; that stretch reads CKICYNRYNLKQRKPKVLECCHRVCAKCLYKIIDFGDSPQGVIVCPFCR. 2 helical membrane passes run 184-204 and 211-231; these read VLVWLLGLLYFSSLPLGIYLL and LGVVFVSLVPSSLVILMVYGF.

Interacts with ATP6V0C.

It localises to the membrane. Its subcellular location is the cytoplasm. It carries out the reaction S-ubiquitinyl-[E2 ubiquitin-conjugating enzyme]-L-cysteine + [acceptor protein]-L-lysine = [E2 ubiquitin-conjugating enzyme]-L-cysteine + N(6)-ubiquitinyl-[acceptor protein]-L-lysine.. It functions in the pathway protein modification; protein ubiquitination. Its function is as follows. E3 ubiquitin-protein ligase that mediates the ubiquitination of ATP6V0C and targets it to degradation via the ubiquitin-proteasome pathway. Also plays a role in the inhibition of TLR-triggered innate immune response by mediating 'Lys'-48-linked ubiquitination and subsequent degradation of NF-kappa-B component RELA. This is E3 ubiquitin-protein ligase RNF182 (Rnf182) from Rattus norvegicus (Rat).